The primary structure comprises 152 residues: Superoxide dismutase [Cu-Zn] (152 aa).

His45, His47, and His62 together coordinate Cu cation. A disulfide bridge connects residues Cys56 and Cys145. 4 residues coordinate Zn(2+): His62, His70, His79, and Asp82. His119 provides a ligand contact to Cu cation.

Belongs to the Cu-Zn superoxide dismutase family. In terms of assembly, homodimer. The cofactor is Cu cation. Requires Zn(2+) as cofactor.

It localises to the cytoplasm. The catalysed reaction is 2 superoxide + 2 H(+) = H2O2 + O2. Destroys radicals which are normally produced within the cells and which are toxic to biological systems. The sequence is that of Superoxide dismutase [Cu-Zn] (SODCC) from Zantedeschia aethiopica (White calla lily).